A 397-amino-acid polypeptide reads, in one-letter code: Xylose isomerase (397 aa).

Catalysis depends on residues His54 and Asp57. Residues Glu181, Glu217, His220, Asp245, Asp255, Asp257, and Asp293 each contribute to the Mg(2+) site.

This sequence belongs to the xylose isomerase family. In terms of assembly, homotetramer. The cofactor is Mg(2+).

The protein localises to the cytoplasm. The enzyme catalyses alpha-D-xylose = alpha-D-xylulofuranose. The protein is Xylose isomerase of Clavibacter michiganensis subsp. michiganensis (strain NCPPB 382).